Consider the following 617-residue polypeptide: Procollagen galactosyltransferase 1 (617 aa).

The first 31 residues, 1–31 (MAALPRGSRGLPLLPLLLLLPPLGGPRGADG), serve as a signal peptide directing secretion. Residues N91, N179, and N376 are each glycosylated (N-linked (GlcNAc...) asparagine). A compositionally biased stretch (basic and acidic residues) spans 582 to 601 (DRAKSQKMREQQALSREAKN). The interval 582–617 (DRAKSQKMREQQALSREAKNSDVLQSPLDSTARDEL) is disordered. The short motif at 614–617 (RDEL) is the Prevents secretion from ER element.

It belongs to the glycosyltransferase 25 family. N-glycosylated.

The protein resides in the endoplasmic reticulum lumen. It carries out the reaction (5R)-5-hydroxy-L-lysyl-[collagen] + UDP-alpha-D-galactose = (5R)-5-O-(beta-D-galactosyl)-5-hydroxy-L-lysyl-[collagen] + UDP + H(+). In terms of biological role, beta-galactosyltransferase that transfers beta-galactose to hydroxylysine residues of type I collagen. By acting on collagen glycosylation, facilitates the formation of collagen triple helix. Also involved in the biosynthesis of collagen type IV. The protein is Procollagen galactosyltransferase 1 (Colgalt1) of Mus musculus (Mouse).